The sequence spans 301 residues: Probable 5-dehydro-4-deoxyglucarate dehydratase (301 aa).

Belongs to the DapA family.

It carries out the reaction 5-dehydro-4-deoxy-D-glucarate + H(+) = 2,5-dioxopentanoate + CO2 + H2O. It functions in the pathway carbohydrate acid metabolism; D-glucarate degradation; 2,5-dioxopentanoate from D-glucarate: step 2/2. This is Probable 5-dehydro-4-deoxyglucarate dehydratase from Cereibacter sphaeroides (strain ATCC 17029 / ATH 2.4.9) (Rhodobacter sphaeroides).